An 87-amino-acid chain; its full sequence is Phosphoribosyl-ATP pyrophosphatase (87 aa).

The protein belongs to the PRA-PH family.

It localises to the cytoplasm. The catalysed reaction is 1-(5-phospho-beta-D-ribosyl)-ATP + H2O = 1-(5-phospho-beta-D-ribosyl)-5'-AMP + diphosphate + H(+). Its pathway is amino-acid biosynthesis; L-histidine biosynthesis; L-histidine from 5-phospho-alpha-D-ribose 1-diphosphate: step 2/9. This chain is Phosphoribosyl-ATP pyrophosphatase, found in Corynebacterium diphtheriae (strain ATCC 700971 / NCTC 13129 / Biotype gravis).